Reading from the N-terminus, the 525-residue chain is GMP synthase [glutamine-hydrolyzing] (525 aa).

In terms of domain architecture, Glutamine amidotransferase type-1 spans 9–207 (RILILDFGSQ…VRDICQCEAL (199 aa)). Catalysis depends on Cys86, which acts as the Nucleophile. Catalysis depends on residues His181 and Glu183. Residues 208-400 (WTPAKIIDDA…LGLPYDMLYR (193 aa)) enclose the GMPS ATP-PPase domain. An ATP-binding site is contributed by 235–241 (SGGVDSS).

As to quaternary structure, homodimer.

The enzyme catalyses XMP + L-glutamine + ATP + H2O = GMP + L-glutamate + AMP + diphosphate + 2 H(+). It functions in the pathway purine metabolism; GMP biosynthesis; GMP from XMP (L-Gln route): step 1/1. Functionally, catalyzes the synthesis of GMP from XMP. This is GMP synthase [glutamine-hydrolyzing] from Salmonella typhi.